The sequence spans 159 residues: Succinate dehydrogenase [ubiquinone] cytochrome b small subunit, mitochondrial (159 aa).

The N-terminal 56 residues, 1-56, are a transit peptide targeting the mitochondrion; sequence MAVLLKLGVLCSGQGARALSLRSRAVRPAFVSAFLQDQPTPGWRGTQHIHLSPSHQ. Residues 57–63 lie on the Mitochondrial matrix side of the membrane; the sequence is SGSKAAS. A helical membrane pass occupies residues 64-85; sequence LHWTSERVVSVLLLGLIPAGYL. Residues 86–90 lie on the Mitochondrial intermembrane side of the membrane; sequence NPCSV. A helical transmembrane segment spans residues 91–111; that stretch reads VDYSLAAALTLHSHWGIGQVV. Heme b is bound at residue His-102. Residues 112 to 120 are Mitochondrial matrix-facing; the sequence is TDYVHGDAL. Position 114 (Tyr-114) interacts with a ubiquinone. The chain crosses the membrane as a helical span at residues 121-142; that stretch reads QKATKAGLLAVSALTFAGLCYF. At 143-159 the chain is on the mitochondrial intermembrane side; it reads NYHDVGICRAVAMLWKL.

This sequence belongs to the CybS family. As to quaternary structure, component of complex II composed of four subunits: the flavoprotein (FP) SDHA, iron-sulfur protein (IP) SDHB, and a cytochrome b560 composed of SDHC and SDHD.

It is found in the mitochondrion inner membrane. It participates in carbohydrate metabolism; tricarboxylic acid cycle. Its function is as follows. Membrane-anchoring subunit of succinate dehydrogenase (SDH) that is involved in complex II of the mitochondrial electron transport chain and is responsible for transferring electrons from succinate to ubiquinone (coenzyme Q). SDH also oxidizes malate to the non-canonical enol form of oxaloacetate, enol-oxaloacetate. Enol-oxaloacetate, which is a potent inhibitor of the succinate dehydrogenase activity, is further isomerized into keto-oxaloacetate. The protein is Succinate dehydrogenase [ubiquinone] cytochrome b small subunit, mitochondrial (Sdhd) of Rattus norvegicus (Rat).